Here is a 448-residue protein sequence, read N- to C-terminus: RuvB-like 2 (448 aa).

73 to 80 is a binding site for ATP; sequence GEPGAGKT.

The protein belongs to the RuvB family. Forms homohexameric rings. May form a dodecamer with ruvb-1 made of two stacked hexameric rings. As to expression, expressed in gonadal cells.

Its subcellular location is the cytoplasm. The protein resides in the nucleus. The catalysed reaction is ATP + H2O = ADP + phosphate + H(+). Its function is as follows. Possesses single-stranded DNA-stimulated ATPase and ATP-dependent DNA helicase (5' to 3') activity suggesting a role in nuclear processes such as recombination and transcription. May participate in several chromatin remodeling complexes that mediate the ATP-dependent exchange of histones and remodel chromatin by shifting nucleosomes. Involvement in these complexes is likely required for transcriptional activation of selected genes and DNA repair in response to DNA damage. Has a role in gonadal development. Involved in the endoplasmic reticulum (ER)-associated degradation (ERAD) pathway where it negatively regulates expression of ER stress response genes. Specifically, negatively controls the expression of ER homeostasis regulator ckb-2 in a cdc-48.1/2-dependent manner. In Caenorhabditis elegans, this protein is RuvB-like 2.